A 1923-amino-acid chain; its full sequence is Nuclear pore complex protein GP210 (1923 aa).

Residues 1 to 22 form the signal peptide; that stretch reads MVPVSFCFFFLLLLLSAGESSS. N-linked (GlcNAc...) asparagine glycosylation is found at Asn-73, Asn-117, Asn-289, Asn-609, Asn-863, Asn-903, Asn-967, Asn-982, Asn-1171, Asn-1199, Asn-1550, Asn-1568, and Asn-1743. The 54-residue stretch at 1152–1205 folds into the BIG2 domain; it reads IFLVPGASYVLTIEGGPTMNVSVDYTTVDNEVAKIEKSGRLYATSPGNTTIYAT. The chain crosses the membrane as a helical span at residues 1829-1849; the sequence is SVLLKILWGVLVLVVSVIILM.

The protein belongs to the NUP210 family. Part of the nuclear pore complex (NPC). The NPC has an eight-fold symmetrical structure comprising a central transport channel and two rings, the cytoplasmic and nuclear rings, to which eight filaments are attached. The cytoplasmic filaments have loose ends, while the nuclear filaments are joined in a distal ring, forming a nuclear basket. NPCs are highly dynamic in configuration and composition, and can be devided in 3 subcomplexes, the NUP62 subcomplex, the NUP107-160 subcomplex and the NUP93 subcomplex, containing approximately 30 different nucleoporin proteins.

It is found in the nucleus envelope. Its subcellular location is the nucleus membrane. The protein resides in the nucleus. The protein localises to the nuclear pore complex. This is Nuclear pore complex protein GP210 from Arabidopsis thaliana (Mouse-ear cress).